The sequence spans 103 residues: Somatoliberin (103 aa).

Positions 1–19 (MLLWVLFVILILTSGSHCS) are cleaved as a signal peptide. 2 propeptides span residues 20–30 (LPPSPPFRMQR) and 74–103 (QEDSMWTEDKQMTLESILQGFPRMKPSADA).

It belongs to the glucagon family.

Its subcellular location is the secreted. GRF is released by the hypothalamus and acts on the adenohypophyse to stimulate the secretion of growth hormone. The protein is Somatoliberin (Ghrh) of Mus musculus (Mouse).